The chain runs to 615 residues: Elongation factor 4 (615 aa).

The region spanning 14-200 is the tr-type G domain; the sequence is SRIRNFCIIA…KVVELIPAPS (187 aa). Residues 26–31 and 147–150 contribute to the GTP site; these read DHGKST and NKID.

Belongs to the TRAFAC class translation factor GTPase superfamily. Classic translation factor GTPase family. LepA subfamily.

Its subcellular location is the cell membrane. It carries out the reaction GTP + H2O = GDP + phosphate + H(+). Functionally, required for accurate and efficient protein synthesis under certain stress conditions. May act as a fidelity factor of the translation reaction, by catalyzing a one-codon backward translocation of tRNAs on improperly translocated ribosomes. Back-translocation proceeds from a post-translocation (POST) complex to a pre-translocation (PRE) complex, thus giving elongation factor G a second chance to translocate the tRNAs correctly. Binds to ribosomes in a GTP-dependent manner. The protein is Elongation factor 4 of Corynebacterium efficiens (strain DSM 44549 / YS-314 / AJ 12310 / JCM 11189 / NBRC 100395).